Reading from the N-terminus, the 459-residue chain is Probable 3-ketoacyl-CoA synthase 14 (459 aa).

A signal peptide spans 1-25 (MFIAMADFKLLLLILILLSLFELDL). A helical transmembrane segment spans residues 32–52 (FFSPFPVKIGLLLISIFFYAY). In terms of domain architecture, FAE spans 52–334 (YSTTRSKPVY…FILFLVKSKL (283 aa)). Catalysis depends on residues histidine 268, histidine 352, histidine 356, histidine 385, and asparagine 389.

This sequence belongs to the thiolase-like superfamily. Chalcone/stilbene synthases family. In terms of tissue distribution, expressed in siliques.

Its subcellular location is the membrane. It carries out the reaction a very-long-chain acyl-CoA + malonyl-CoA + H(+) = a very-long-chain 3-oxoacyl-CoA + CO2 + CoA. It participates in lipid metabolism; fatty acid biosynthesis. This Arabidopsis thaliana (Mouse-ear cress) protein is Probable 3-ketoacyl-CoA synthase 14.